Reading from the N-terminus, the 393-residue chain is SH3 domain-binding protein 5-like (393 aa).

The tract at residues 1 to 58 (MAELRQVPGGRETPQGELRPEVVEDEVPRSPVAEEPGGGGSSSSEAKLSPREEEELDP) is disordered. At Thr-13 the chain carries Phosphothreonine. The segment covering 18–28 (LRPEVVEDEVP) has biased composition (basic and acidic residues). Residues Ser-30 and Ser-49 each carry the phosphoserine modification. Coiled-coil stretches lie at residues 59-140 (RIQE…YERA) and 169-272 (WQEM…EQIH). Residues 273 to 332 (ARRRGGLPPHPLGPRRSSPVGAEAGPEDMEDGDSGIEGAEGAGLEEGSSLGPGPAPDTDT) form a disordered region. The span at 297-306 (GPEDMEDGDS) shows a compositional bias: acidic residues. Positions 317 to 332 (EEGSSLGPGPAPDTDT) are enriched in low complexity. A phosphoserine mark is found at Ser-343, Ser-350, Ser-358, Ser-362, and Ser-378. The interval 362–393 (SLDGQELGTRSGGRRGSDGGARGGRHQRSVSL) is disordered. Basic residues predominate over residues 384 to 393 (GGRHQRSVSL).

The protein belongs to the SH3BP5 family.

Its function is as follows. Functions as a guanine nucleotide exchange factor (GEF) for RAB11A. The sequence is that of SH3 domain-binding protein 5-like (SH3BP5L) from Homo sapiens (Human).